The chain runs to 610 residues: Probable pleckstrin homology domain-containing family N member 1 (610 aa).

The tract at residues 1–30 is disordered; the sequence is MGNSHCVPQAPRRLRASFSRKPSLKGNRED. Residue Gly2 is the site of N-myristoyl glycine attachment. The tract at residues 61-100 is interaction with C1QBP; that stretch reads TDIPGPEHHPENLEQPFLSVFKKGWRRTPVRNLGKVVHYS. PH domains follow at residues 96–192 and 227–324; these read VVHY…MALL and AICA…SRRD. Tyr307 is subject to Phosphotyrosine. 4 disordered regions span residues 327–357, 371–431, 443–473, and 493–610; these read HLPPGPESFPGLQKPTQLVGRGRGSLSSNGR, QSLP…PLPL, LDSGPEAQDHSLDIPHSPLYADPYTPPATSR, and PGPD…IQWI. Polar residues-rich tracts occupy residues 371–380 and 391–402; these read QSLPESSVPT and NQTDSNCVSTGQ. Tyr462 bears the Phosphotyrosine mark. The span at 504–526 shows a compositional bias: low complexity; sequence VSVSVPVSESSSGISSSPGPLGS.

Found in a complex with cytochrome c mRNA and various ribosomal proteins. Interacts with C1QBP, ELAVL1 and BID. Phosphorylation is essential for its mitochondrial localization and regulates its interaction with C1QBP. Testis and adipose tissue (at protein level). Ubiquitous.

It localises to the cell membrane. Its subcellular location is the mitochondrion membrane. The protein localises to the mitochondrion. Functionally, controls the stability of the leptin mRNA harboring an AU-rich element (ARE) in its 3' UTR, in cooperation with the RNA stabilizer ELAVL1. Decreases the stability of the leptin mRNA by antagonizing the function of ELAVL1 by inducing its atypical recruitment from the nucleus to the cytosol. Binds to cardiolipin (CL), phosphatidic acid (PA), phosphatidylinositol 4-phosphate (PtdIns(4)P) and phosphatidylserine (PS). This Mus musculus (Mouse) protein is Probable pleckstrin homology domain-containing family N member 1 (Plekhn1).